Consider the following 382-residue polypeptide: Membrane protein MLC1 (382 aa).

Residues 1-28 are compositionally biased toward basic and acidic residues; it reads MTREGQFREELGYDRMPTLERGRQDAGR. Residues 1–43 form a disordered region; sequence MTREGQFREELGYDRMPTLERGRQDAGRQDPGSYTPDSKPKDL. Helical transmembrane passes span 58-78, 88-107, 117-137, and 148-168; these read WVFS…SLYL, YLRC…FAVG, FQIL…WFGC, and INFN…TVII. Serine 183, serine 185, and serine 188 each carry phosphoserine. 4 helical membrane-spanning segments follow: residues 205–225, 234–254, 263–283, and 309–329; these read SVVE…ALNV, LSVT…ASHV, LVEV…TASG, and LLLL…GTAI.

As to quaternary structure, interacts with ATP1B1. Part of a complex containing ATP1B1, TRPV4, AQP4 and HEPACAM.

The protein localises to the membrane. It is found in the cell membrane. It localises to the cytoplasm. Its subcellular location is the perinuclear region. The protein resides in the endoplasmic reticulum. In terms of biological role, transmembrane protein mainly expressed in brain astrocytes that may play a role in transport across the blood-brain and brain-cerebrospinal fluid barriers. Regulates the response of astrocytes to hypo-osmosis by promoting calcium influx. May function as regulatory protein of membrane protein complexes such as ion channels. The sequence is that of Membrane protein MLC1 from Mus musculus (Mouse).